We begin with the raw amino-acid sequence, 280 residues long: 4-diphosphocytidyl-2-C-methyl-D-erythritol kinase (280 aa).

The active site involves Lys-8. Residue 91 to 101 (PVAAGLAGGST) participates in ATP binding. Asp-133 is a catalytic residue.

Belongs to the GHMP kinase family. IspE subfamily.

It catalyses the reaction 4-CDP-2-C-methyl-D-erythritol + ATP = 4-CDP-2-C-methyl-D-erythritol 2-phosphate + ADP + H(+). The protein operates within isoprenoid biosynthesis; isopentenyl diphosphate biosynthesis via DXP pathway; isopentenyl diphosphate from 1-deoxy-D-xylulose 5-phosphate: step 3/6. Functionally, catalyzes the phosphorylation of the position 2 hydroxy group of 4-diphosphocytidyl-2C-methyl-D-erythritol. This chain is 4-diphosphocytidyl-2-C-methyl-D-erythritol kinase, found in Clostridium botulinum (strain Okra / Type B1).